The sequence spans 327 residues: ATPase ASNA1 homolog (327 aa).

26-33 (KGGVGKTT) is an ATP binding site. Asp57 is an active-site residue. ATP contacts are provided by Glu238 and Asn265. Zn(2+) is bound by residues Cys274 and Cys277.

It belongs to the arsA ATPase family. As to quaternary structure, homodimer.

It localises to the cytoplasm. It is found in the endoplasmic reticulum. Its function is as follows. ATPase required for the post-translational delivery of tail-anchored (TA) proteins to the endoplasmic reticulum. Recognizes and selectively binds the transmembrane domain of TA proteins in the cytosol. This complex then targets to the endoplasmic reticulum by membrane-bound receptors, where the tail-anchored protein is released for insertion. This process is regulated by ATP binding and hydrolysis. ATP binding drives the homodimer towards the closed dimer state, facilitating recognition of newly synthesized TA membrane proteins. ATP hydrolysis is required for insertion. Subsequently, the homodimer reverts towards the open dimer state, lowering its affinity for the membrane-bound receptor, and returning it to the cytosol to initiate a new round of targeting. The polypeptide is ATPase ASNA1 homolog (Entamoeba dispar (strain ATCC PRA-260 / SAW760)).